A 198-amino-acid chain; its full sequence is Na(+)-translocating NADH-quinone reductase subunit E (198 aa).

The next 6 helical transmembrane spans lie at S11 to V31, V35 to A55, F77 to I97, G110 to V130, V140 to I160, and L176 to I196.

This sequence belongs to the NqrDE/RnfAE family. As to quaternary structure, composed of six subunits; NqrA, NqrB, NqrC, NqrD, NqrE and NqrF.

It is found in the cell inner membrane. It catalyses the reaction a ubiquinone + n Na(+)(in) + NADH + H(+) = a ubiquinol + n Na(+)(out) + NAD(+). In terms of biological role, NQR complex catalyzes the reduction of ubiquinone-1 to ubiquinol by two successive reactions, coupled with the transport of Na(+) ions from the cytoplasm to the periplasm. NqrA to NqrE are probably involved in the second step, the conversion of ubisemiquinone to ubiquinol. This chain is Na(+)-translocating NADH-quinone reductase subunit E, found in Glaesserella parasuis serovar 5 (strain SH0165) (Haemophilus parasuis).